Here is a 414-residue protein sequence, read N- to C-terminus: Gamma-glutamyl phosphate reductase (414 aa).

Belongs to the gamma-glutamyl phosphate reductase family.

It is found in the cytoplasm. It carries out the reaction L-glutamate 5-semialdehyde + phosphate + NADP(+) = L-glutamyl 5-phosphate + NADPH + H(+). It functions in the pathway amino-acid biosynthesis; L-proline biosynthesis; L-glutamate 5-semialdehyde from L-glutamate: step 2/2. Functionally, catalyzes the NADPH-dependent reduction of L-glutamate 5-phosphate into L-glutamate 5-semialdehyde and phosphate. The product spontaneously undergoes cyclization to form 1-pyrroline-5-carboxylate. The sequence is that of Gamma-glutamyl phosphate reductase from Geobacillus thermodenitrificans (strain NG80-2).